Reading from the N-terminus, the 332-residue chain is MLLLAAASLVAFVLLLYMVSPLISPKPLALPGAHVVVTGGSSGIGKCIAIECYKQGAFITLVARNEDKLLQAKKEIEKHSINDKQVVLCISVDVSQDYSQVENVIKQAQEKLGPVDMLVNCAGMSLSGKFEDLEVSTFERLMSINYLGSVYPSRAVIATMKERRMGRVVFVSSQAGQLGLFGYTAYSSSKFALRGLAEALQMEVKPYNVYVTVAYPPDTDTPGFAKENQTKPLETRLISETTSVCKPEQVAKQIVKDAVQGNFNSSIGSDGYMLSSLTCGMAPVTSIMEGLQQVVTMGLFRTIALFYLGSFDSIVRRCMMQKAKLETVDKTA.

The signal sequence occupies residues 1–25 (MLLLAAASLVAFVLLLYMVSPLISP). The Cytoplasmic portion of the chain corresponds to 26–269 (KPLALPGAHV…QGNFNSSIGS (244 aa)). Residues Gly-39, Ser-41, Ser-42, Gly-43, Arg-64, Lys-68, and Asp-93 each contribute to the NADPH site. Positions 39–43 (GGSSG) match the GXSXG motif. Ser-172 acts as the Proton donor in catalysis. The Proton acceptor role is filled by Tyr-186. Tyr-186 and Lys-190 together coordinate NADP(+). Residue Lys-190 is the Lowers pKa of active site Tyr of the active site. A helical transmembrane segment spans residues 270–290 (DGYMLSSLTCGMAPVTSIMEG). The Lumenal segment spans residues 291-292 (LQ). A helical membrane pass occupies residues 293–313 (QVVTMGLFRTIALFYLGSFDS). The Cytoplasmic segment spans residues 314-331 (IVRRCMMQKAKLETVDKT).

Belongs to the short-chain dehydrogenases/reductases (SDR) family.

Its subcellular location is the endoplasmic reticulum membrane. It catalyses the reaction sphinganine + NADP(+) = 3-oxosphinganine + NADPH + H(+). Its pathway is lipid metabolism; sphingolipid metabolism. In terms of biological role, catalyzes the reduction of 3'-oxosphinganine (3-ketodihydrosphingosine/KDS) to sphinganine (dihydrosphingosine/DHS), the second step of de novo sphingolipid biosynthesis. This Bos taurus (Bovine) protein is 3-ketodihydrosphingosine reductase (KDSR).